The following is a 236-amino-acid chain: 5'-methylthioadenosine/S-adenosylhomocysteine nucleosidase (236 aa).

E12 functions as the Proton acceptor in the catalytic mechanism. Substrate is bound by residues G78, I153, and 174–175 (ME). The Proton donor role is filled by D198.

It belongs to the PNP/UDP phosphorylase family. MtnN subfamily.

The enzyme catalyses S-adenosyl-L-homocysteine + H2O = S-(5-deoxy-D-ribos-5-yl)-L-homocysteine + adenine. It carries out the reaction S-methyl-5'-thioadenosine + H2O = 5-(methylsulfanyl)-D-ribose + adenine. It catalyses the reaction 5'-deoxyadenosine + H2O = 5-deoxy-D-ribose + adenine. It participates in amino-acid biosynthesis; L-methionine biosynthesis via salvage pathway; S-methyl-5-thio-alpha-D-ribose 1-phosphate from S-methyl-5'-thioadenosine (hydrolase route): step 1/2. Its function is as follows. Catalyzes the irreversible cleavage of the glycosidic bond in both 5'-methylthioadenosine (MTA) and S-adenosylhomocysteine (SAH/AdoHcy) to adenine and the corresponding thioribose, 5'-methylthioribose and S-ribosylhomocysteine, respectively. Also cleaves 5'-deoxyadenosine, a toxic by-product of radical S-adenosylmethionine (SAM) enzymes, into 5-deoxyribose and adenine. This is 5'-methylthioadenosine/S-adenosylhomocysteine nucleosidase from Shewanella baltica (strain OS185).